We begin with the raw amino-acid sequence, 57 residues long: Small ribosomal subunit protein bS21 (57 aa).

Residues 32-57 form a disordered region; sequence VRKRKHFEKPSVKRKKKSEAARKRKF. Over residues 33 to 57 the composition is skewed to basic residues; that stretch reads RKRKHFEKPSVKRKKKSEAARKRKF.

This sequence belongs to the bacterial ribosomal protein bS21 family.

This chain is Small ribosomal subunit protein bS21, found in Shouchella clausii (strain KSM-K16) (Alkalihalobacillus clausii).